Consider the following 584-residue polypeptide: Sodium/calcium exchanger NCL1 (584 aa).

Transmembrane regions (helical) follow at residues 77–97, 120–140, 154–174, 215–235, and 245–265; these read FLPCTTTVLGNLFLVLAYGFL, LVGGLLLPILGALPDALLVLV, VLIGMGLLAGSTVFLLTLLWG, AARIMGISVIPFIIAQFPKML, and VLLALIVSFSLVLAYCLYQVF. 2 consecutive EF-hand domains span residues 305 to 340 and 345 to 380; these read PNEDVIKKLFHKIDMDESQTLSRAELHALIIGINFE and DKNDAVDKIMDDFDTSGNDIVEEAEFVSGMKRWLNE. Ca(2+)-binding residues include aspartate 318, aspartate 320, serine 322, threonine 324, glutamate 329, aspartate 358, serine 360, asparagine 362, and glutamate 369. The next 5 membrane-spanning stretches (helical) occupy residues 426 to 446, 466 to 486, 504 to 524, 531 to 551, and 561 to 581; these read WCITKAVGLLLLGSAIAAAFA, FISFIALPLATNSSEAVSAII, YGGVTMNNTLCLGVFLALIYI, FSSEVLIILLVCVIMGLFTSF, and LVAYMLYPLSLVVVYILDFVF.

This sequence belongs to the Ca(2+):cation antiporter (CaCA) (TC 2.A.19) family.

The protein localises to the cell membrane. May function as a sodium/calcium exchanger (NCX) and participate in the maintenance of calcium homeostasis. May play a role abiotic stress responses. This chain is Sodium/calcium exchanger NCL1, found in Oryza sativa subsp. japonica (Rice).